The chain runs to 126 residues: Small ribosomal subunit protein uS12 (126 aa).

The disordered stretch occupies residues 1-28 (MPTINQLVRKGRQSETTKSKSPALQDCP). Asp-89 bears the 3-methylthioaspartic acid mark. The disordered stretch occupies residues 103 to 126 (DTQGVKDRKQARSKYGAKRAKAGK). Residues 113–126 (ARSKYGAKRAKAGK) show a composition bias toward basic residues.

It belongs to the universal ribosomal protein uS12 family. In terms of assembly, part of the 30S ribosomal subunit. Contacts proteins S8 and S17. May interact with IF1 in the 30S initiation complex.

Functionally, with S4 and S5 plays an important role in translational accuracy. Its function is as follows. Interacts with and stabilizes bases of the 16S rRNA that are involved in tRNA selection in the A site and with the mRNA backbone. Located at the interface of the 30S and 50S subunits, it traverses the body of the 30S subunit contacting proteins on the other side and probably holding the rRNA structure together. The combined cluster of proteins S8, S12 and S17 appears to hold together the shoulder and platform of the 30S subunit. The chain is Small ribosomal subunit protein uS12 from Paraburkholderia phytofirmans (strain DSM 17436 / LMG 22146 / PsJN) (Burkholderia phytofirmans).